The primary structure comprises 193 residues: Potassium-transporting ATPase KdpC subunit (193 aa).

Residues 11 to 31 traverse the membrane as a helical segment; that stretch reads FTLVFMVLLGLVYPFVMTGIA.

Belongs to the KdpC family. In terms of assembly, the system is composed of three essential subunits: KdpA, KdpB and KdpC.

Its subcellular location is the cell membrane. In terms of biological role, part of the high-affinity ATP-driven potassium transport (or Kdp) system, which catalyzes the hydrolysis of ATP coupled with the electrogenic transport of potassium into the cytoplasm. This subunit acts as a catalytic chaperone that increases the ATP-binding affinity of the ATP-hydrolyzing subunit KdpB by the formation of a transient KdpB/KdpC/ATP ternary complex. This is Potassium-transporting ATPase KdpC subunit from Caldanaerobacter subterraneus subsp. tengcongensis (strain DSM 15242 / JCM 11007 / NBRC 100824 / MB4) (Thermoanaerobacter tengcongensis).